Reading from the N-terminus, the 363-residue chain is Probable mannitol dehydrogenase 3 (363 aa).

Positions 51, 73, 104, 107, 110, 118, and 168 each coordinate Zn(2+).

Belongs to the zinc-containing alcohol dehydrogenase family. The cofactor is Zn(2+).

The catalysed reaction is D-mannitol + NAD(+) = D-mannose + NADH + H(+). Oxidizes mannitol to mannose. Provides the initial step by which translocated mannitol is committed to central metabolism and, by regulating mannitol pool size, is important in regulating salt tolerance at the cellular level. In Stylosanthes humilis (Townsville stylo), this protein is Probable mannitol dehydrogenase 3 (CAD3).